We begin with the raw amino-acid sequence, 763 residues long: Palmitoyltransferase AKR1 (763 aa).

A compositionally biased stretch (polar residues) spans 1–15 (MEDNSEQASVSSQAS). Residues 1–59 (MEDNSEQASVSSQASMRPLVSDNGDREAGAGVEVNIANDNDTSVGVDGENGNEDDDPIL) are disordered. The Cytoplasmic segment spans residues 1–307 (MEDNSEQASV…KLVKRDDHAK (307 aa)). 7 ANK repeats span residues 57–87 (PILS…NVSS), 92–121 (EGVT…NVES), 126–155 (LEAT…SATT), 159–188 (QGFN…SKGI), 197–226 (KGRT…SVKI), 230–259 (GGFT…DFFQ), and 292–322 (NGYP…GFAF). A helical membrane pass occupies residues 308–325 (IITFLIPLLVLGFAFFGF). The Lumenal portion of the chain corresponds to 326–330 (SHLHI). Residues 331 to 348 (LFALPVIILLLLASNKFI) form a helical membrane-spanning segment. The Cytoplasmic segment spans residues 349 to 368 (KSFLLPSYETKGTNSASLLK). Residues 369–389 (SPLIAGILFGSIFWLAFVWIL) form a helical membrane-spanning segment. Residues 390-401 (RILPYTFTKRPL) are Lumenal-facing. A helical transmembrane segment spans residues 402–422 (GNLTFCAILCFVCYSLFLLAF). The Cytoplasmic portion of the chain corresponds to 423-497 (SDPGHIGSEN…YNDVGLKNHK (75 aa)). Positions 454–504 (SFCLETWVRKPLRSKYSYLNDALILRFDHYCPWIYNDVGLKNHKLFIFFIL) constitute a DHHC domain. Cysteine 484 functions as the S-palmitoyl cysteine intermediate in the catalytic mechanism. Residues 498 to 518 (LFIFFILALELGIFSFVKVCL) traverse the membrane as a helical segment. Over 519-546 (KYFDELDMDGDCFILGDDDLCSGLIGDR) the chain is Lumenal. A helical membrane pass occupies residues 547 to 567 (FTFLIMTWACIQAVWIFSLVI). At 568 to 763 (VQLFQITKGL…DPLSEIDDMV (196 aa)) the chain is on the cytoplasmic side.

It belongs to the DHHC palmitoyltransferase family. AKR/ZDHHC17 subfamily.

The protein localises to the early endosome membrane. It localises to the golgi apparatus membrane. It catalyses the reaction L-cysteinyl-[protein] + hexadecanoyl-CoA = S-hexadecanoyl-L-cysteinyl-[protein] + CoA. In terms of biological role, palmitoyltransferase specific for casein kinase 1. This Candida glabrata (strain ATCC 2001 / BCRC 20586 / JCM 3761 / NBRC 0622 / NRRL Y-65 / CBS 138) (Yeast) protein is Palmitoyltransferase AKR1 (AKR1).